A 558-amino-acid polypeptide reads, in one-letter code: Glucose-6-phosphate isomerase (558 aa).

Glu362 (proton donor) is an active-site residue. Active-site residues include His393 and Lys523.

Belongs to the GPI family.

The protein localises to the cytoplasm. The catalysed reaction is alpha-D-glucose 6-phosphate = beta-D-fructose 6-phosphate. It participates in carbohydrate degradation; glycolysis; D-glyceraldehyde 3-phosphate and glycerone phosphate from D-glucose: step 2/4. This Drosophila simulans (Fruit fly) protein is Glucose-6-phosphate isomerase (Pgi).